Reading from the N-terminus, the 460-residue chain is GTPase Der (460 aa).

2 EngA-type G domains span residues 21–187 (PRVV…FSVD) and 198–373 (VRLA…AQLN). GTP-binding positions include 27–34 (GRPNVGKS), 74–78 (DTSGF), 141–144 (NKTE), 204–211 (GKPNTGKS), 251–255 (DTAGI), and 316–319 (NKWD). One can recognise a KH-like domain in the interval 374–457 (TKVETSALNT…PVKLTIRKNC (84 aa)).

This sequence belongs to the TRAFAC class TrmE-Era-EngA-EngB-Septin-like GTPase superfamily. EngA (Der) GTPase family. In terms of assembly, associates with the 50S ribosomal subunit.

In terms of biological role, GTPase that plays an essential role in the late steps of ribosome biogenesis. This chain is GTPase Der, found in Treponema pallidum subsp. pallidum (strain SS14).